The primary structure comprises 56 residues: Ovomucoid (56 aa).

Residues 6 to 56 enclose the Kazal-like domain; sequence VDCSEYPKPACTLEYRPLCGSDNKTYANKCNFCNAVVESNGTLTLSHFGKC. Disulfide bonds link cysteine 8-cysteine 38, cysteine 16-cysteine 35, and cysteine 24-cysteine 56. N-linked (GlcNAc...) asparagine glycosylation occurs at asparagine 45.

Its subcellular location is the secreted. The chain is Ovomucoid from Callipepla californica (California quail).